A 2280-amino-acid chain; its full sequence is Protein Ycf2 (2280 aa).

1631–1638 (GSIGTGRS) contributes to the ATP binding site.

The protein belongs to the Ycf2 family.

It localises to the plastid. It is found in the chloroplast stroma. Functionally, probable ATPase of unknown function. Its presence in a non-photosynthetic plant (Epifagus virginiana) and experiments in tobacco indicate that it has an essential function which is probably not related to photosynthesis. This is Protein Ycf2 from Nicotiana tomentosiformis (Tobacco).